The primary structure comprises 761 residues: Phosphoribosylformylglycinamidine synthase subunit PurL (761 aa).

Positions 1–16 (MTGNPAAPAATSVSPP) are enriched in low complexity. Residues 1 to 21 (MTGNPAAPAATSVSPPAEQPY) form a disordered region. H57 is a catalytic residue. Residues Y60 and K101 each coordinate ATP. E103 contacts Mg(2+). Substrate-binding positions include 104–107 (SHNH) and R126. H105 serves as the catalytic Proton acceptor. Residue D127 participates in Mg(2+) binding. Q252 contributes to the substrate binding site. D280 provides a ligand contact to Mg(2+). 329–331 (ESQ) contributes to the substrate binding site. Residues N519 and G556 each coordinate ATP. N557 serves as a coordination point for Mg(2+). A substrate-binding site is contributed by S559.

It belongs to the FGAMS family. Monomer. Part of the FGAM synthase complex composed of 1 PurL, 1 PurQ and 2 PurS subunits.

Its subcellular location is the cytoplasm. The catalysed reaction is N(2)-formyl-N(1)-(5-phospho-beta-D-ribosyl)glycinamide + L-glutamine + ATP + H2O = 2-formamido-N(1)-(5-O-phospho-beta-D-ribosyl)acetamidine + L-glutamate + ADP + phosphate + H(+). The protein operates within purine metabolism; IMP biosynthesis via de novo pathway; 5-amino-1-(5-phospho-D-ribosyl)imidazole from N(2)-formyl-N(1)-(5-phospho-D-ribosyl)glycinamide: step 1/2. Part of the phosphoribosylformylglycinamidine synthase complex involved in the purines biosynthetic pathway. Catalyzes the ATP-dependent conversion of formylglycinamide ribonucleotide (FGAR) and glutamine to yield formylglycinamidine ribonucleotide (FGAM) and glutamate. The FGAM synthase complex is composed of three subunits. PurQ produces an ammonia molecule by converting glutamine to glutamate. PurL transfers the ammonia molecule to FGAR to form FGAM in an ATP-dependent manner. PurS interacts with PurQ and PurL and is thought to assist in the transfer of the ammonia molecule from PurQ to PurL. This chain is Phosphoribosylformylglycinamidine synthase subunit PurL, found in Frankia casuarinae (strain DSM 45818 / CECT 9043 / HFP020203 / CcI3).